The primary structure comprises 146 residues: D-aminoacyl-tRNA deacylase (146 aa).

The Gly-cisPro motif, important for rejection of L-amino acids motif lies at 138–139; that stretch reads GP.

The protein belongs to the DTD family. As to quaternary structure, homodimer.

The protein localises to the cytoplasm. The enzyme catalyses glycyl-tRNA(Ala) + H2O = tRNA(Ala) + glycine + H(+). It carries out the reaction a D-aminoacyl-tRNA + H2O = a tRNA + a D-alpha-amino acid + H(+). In terms of biological role, an aminoacyl-tRNA editing enzyme that deacylates mischarged D-aminoacyl-tRNAs. Also deacylates mischarged glycyl-tRNA(Ala), protecting cells against glycine mischarging by AlaRS. Acts via tRNA-based rather than protein-based catalysis; rejects L-amino acids rather than detecting D-amino acids in the active site. By recycling D-aminoacyl-tRNA to D-amino acids and free tRNA molecules, this enzyme counteracts the toxicity associated with the formation of D-aminoacyl-tRNA entities in vivo and helps enforce protein L-homochirality. The sequence is that of D-aminoacyl-tRNA deacylase from Stenotrophomonas maltophilia (strain K279a).